A 307-amino-acid chain; its full sequence is Transmembrane and coiled-coil domain-containing protein 5B (307 aa).

Positions 17–207 form a coiled coil; the sequence is FASSLEAVKQ…LEKQISKAQD (191 aa). A helical membrane pass occupies residues 243–265; sequence YFQYLTFMVLVFIRLLAYVIFHL.

This sequence belongs to the TMCO5 family.

The protein localises to the membrane. This is Transmembrane and coiled-coil domain-containing protein 5B (TMCO5B) from Homo sapiens (Human).